A 704-amino-acid chain; its full sequence is MTRQVALDKVRNIGIMAHIDAGKTTTTERILYYTGRLHRMGEVHDGGATMDWMDQEKERGITITSAATTCFWAPKFGNYEGEKHRINIIDTPGHVDFTVEVERSLRVLDGAVALFCAVGGVEPQSETVWRQANKYGVPRVAYVNKMDRTGADFFDTVKSIKERLSANPVPIQIPIGEGEIFAGFVDLIRMKGIIYDKEDGSTYEEVAIPHDLENEARTWRINMLEAVSEVDESLLEKYLNGEDITEMEIRKVLRQATLKVSIIPVLCGSSFKNKGVQFMLDAVVDYLASPLDDGEVEGHHPRTEEPVVRHPNDDEPFAGLAFKIATDPFVGKLTFFRVYSGTLKAGSYVLNSITGKKERIGRVLQMHSNKREDIDCVYAGDIAAAVGLKEVRTGDTLCDENNPVVLEKMVFPEPVIQIAIEPKTKADSDKLGMSLAKLAEEDPTFRVKTDDETGQTLIAGMGELHLEILVDRLKREFKVEANVGQPQVAYRETIRAKVDFEGKFVRQSGGKGQFGLVNLTVEPLEEGKGYEFVDAVKGGVIPREYIPAVNAGIQQAMKDGVVAGYPMQDIKVTLYDGKYHDVDSSEMAFKIAGSIGFKGGARKASPVLLEPIMKVEVVTPEEYLGDVMGDLSSRRGHIEGMGQRAGAQFVHAKVPLSAMFGYSTDLRSMTQGRANYSMEFESYREVPKNIADALQDKRVTKDDY.

One can recognise a tr-type G domain in the interval Asp8–Leu291. GTP is bound by residues Ala17–Thr24, Asp90–His94, and Asn144–Asp147.

It belongs to the TRAFAC class translation factor GTPase superfamily. Classic translation factor GTPase family. EF-G/EF-2 subfamily.

The protein localises to the cytoplasm. Its function is as follows. Catalyzes the GTP-dependent ribosomal translocation step during translation elongation. During this step, the ribosome changes from the pre-translocational (PRE) to the post-translocational (POST) state as the newly formed A-site-bound peptidyl-tRNA and P-site-bound deacylated tRNA move to the P and E sites, respectively. Catalyzes the coordinated movement of the two tRNA molecules, the mRNA and conformational changes in the ribosome. This is Elongation factor G from Chlorobium luteolum (strain DSM 273 / BCRC 81028 / 2530) (Pelodictyon luteolum).